The primary structure comprises 311 residues: MSNSIVIQTNSTVIEDMKQQYKHSLSPKTPQGGIFMAKVPSCTITAYKSGKVMFQGGRAEAEAARWQTVSQTPKTAVKKSVDSHRYAPPASIGTMSIVGSDEVGTGDFFGPMTVVAVYVDAKQIPLLKELGVKDSKNLNDEQITAIAKQLLHVVPYSSLVLHNEKYNELFDKGNNQGKLKALLHNKAITNLLTKIAPTKPEGVLIDQFTQPDTYYKYLAKQKQVQRENVYFATKGESVHLAVAAASILARYSFVKQFNELSKKAGMPLPKGAGKQVDIAAAKLIQKLGKERLPEFVKLHFANTEKAFRLLK.

Residues 95 to 311 (MSIVGSDEVG…NTEKAFRLLK (217 aa)) form the RNase H type-2 domain. Positions 101, 102, and 206 each coordinate a divalent metal cation.

Belongs to the RNase HII family. RnhC subfamily. Mn(2+) is required as a cofactor. It depends on Mg(2+) as a cofactor.

Its subcellular location is the cytoplasm. The enzyme catalyses Endonucleolytic cleavage to 5'-phosphomonoester.. In terms of biological role, endonuclease that specifically degrades the RNA of RNA-DNA hybrids. In Bacillus thuringiensis subsp. konkukian (strain 97-27), this protein is Ribonuclease HIII.